The chain runs to 65 residues: Photosystem II reaction center protein J (65 aa).

The segment covering 1-17 (MSTKLKGPDGRIPDRLP) has biased composition (basic and acidic residues). The tract at residues 1–21 (MSTKLKGPDGRIPDRLPDGSP) is disordered. A helical membrane pass occupies residues 36 to 56 (LWLVATVGGMAVLSVLGLFFF).

It belongs to the PsbJ family. As to quaternary structure, PSII is composed of 1 copy each of membrane proteins PsbA, PsbB, PsbC, PsbD, PsbE, PsbF, PsbH, PsbI, PsbJ, PsbK, PsbL, PsbM, PsbT, PsbX, PsbY, Psb30/Ycf12, peripheral proteins PsbO, CyanoQ (PsbQ), PsbU, PsbV and a large number of cofactors. It forms dimeric complexes.

The protein resides in the cellular thylakoid membrane. Functionally, one of the components of the core complex of photosystem II (PSII). PSII is a light-driven water:plastoquinone oxidoreductase that uses light energy to abstract electrons from H(2)O, generating O(2) and a proton gradient subsequently used for ATP formation. It consists of a core antenna complex that captures photons, and an electron transfer chain that converts photonic excitation into a charge separation. This is Photosystem II reaction center protein J from Prochlorococcus marinus (strain MIT 9313).